The sequence spans 230 residues: Nicotinamide riboside kinase (230 aa).

Residue 12–20 (GASCSGKST) coordinates ATP. Mg(2+) is bound by residues S19 and D38. D38 functions as the Proton acceptor in the catalytic mechanism. Substrate-binding positions include 38–41 (DDFY) and 56–57 (WD). R153 serves as a coordination point for ATP. Residues R154 and 159-160 (GY) each bind substrate. Residues 157 to 159 (RTG) and 203 to 205 (RIQ) each bind ATP.

It belongs to the uridine kinase family. NRK subfamily.

The catalysed reaction is beta-nicotinamide D-riboside + ATP = beta-nicotinamide D-ribonucleotide + ADP + H(+). It carries out the reaction beta-D-ribosylnicotinate + ATP = nicotinate beta-D-ribonucleotide + ADP + H(+). It functions in the pathway cofactor biosynthesis; NAD(+) biosynthesis. In terms of biological role, catalyzes the phosphorylation of nicotinamide riboside (NR) and nicotinic acid riboside (NaR) to form nicotinamide mononucleotide (NMN) and nicotinic acid mononucleotide (NaMN). The chain is Nicotinamide riboside kinase (nrk1) from Schizosaccharomyces pombe (strain 972 / ATCC 24843) (Fission yeast).